Reading from the N-terminus, the 431-residue chain is Adenylosuccinate synthetase (431 aa).

GTP is bound by residues 13–19 and 41–43; these read GDEGKGK and GHT. The Proton acceptor role is filled by D14. Positions 14 and 41 each coordinate Mg(2+). IMP is bound by residues 14 to 17, 39 to 42, T130, R144, Q225, T240, and R304; these read DEGK and NAGH. Catalysis depends on H42, which acts as the Proton donor. Residue 300 to 306 participates in substrate binding; it reads ATTGRKR. GTP contacts are provided by residues R306, 332–334, and 415–417; these read KLD and STG.

This sequence belongs to the adenylosuccinate synthetase family. Homodimer. Mg(2+) is required as a cofactor.

It localises to the cytoplasm. It catalyses the reaction IMP + L-aspartate + GTP = N(6)-(1,2-dicarboxyethyl)-AMP + GDP + phosphate + 2 H(+). The protein operates within purine metabolism; AMP biosynthesis via de novo pathway; AMP from IMP: step 1/2. Its function is as follows. Plays an important role in the de novo pathway of purine nucleotide biosynthesis. Catalyzes the first committed step in the biosynthesis of AMP from IMP. The polypeptide is Adenylosuccinate synthetase (Shewanella piezotolerans (strain WP3 / JCM 13877)).